We begin with the raw amino-acid sequence, 436 residues long: Serine protease inhibitor A6 (436 aa).

The N-terminal stretch at 1–16 is a signal peptide; it reads MHLLVYLSLFFALALA. Residues 26–60 form a disordered region; it reads KHRHRHEQQGHHDSAKHGHQKDKQQQEQIKNDEGK. The span at 32–60 shows a compositional bias: basic and acidic residues; the sequence is EQQGHHDSAKHGHQKDKQQQEQIKNDEGK. N-linked (GlcNAc...) asparagine glycans are attached at residues Asn260 and Asn289.

Belongs to the serpin family. In terms of tissue distribution, liver.

Its subcellular location is the secreted. The protein resides in the extracellular space. In terms of biological role, not yet known. This chain is Serine protease inhibitor A6 (serpina6), found in Xenopus laevis (African clawed frog).